Consider the following 507-residue polypeptide: ATP synthase subunit alpha, chloroplastic (507 aa).

170-177 (IGDRQTGK) provides a ligand contact to ATP.

This sequence belongs to the ATPase alpha/beta chains family. As to quaternary structure, F-type ATPases have 2 components, CF(1) - the catalytic core - and CF(0) - the membrane proton channel. CF(1) has five subunits: alpha(3), beta(3), gamma(1), delta(1), epsilon(1). CF(0) has four main subunits: a, b, b' and c.

It localises to the plastid. The protein resides in the chloroplast thylakoid membrane. It catalyses the reaction ATP + H2O + 4 H(+)(in) = ADP + phosphate + 5 H(+)(out). Functionally, produces ATP from ADP in the presence of a proton gradient across the membrane. The alpha chain is a regulatory subunit. This is ATP synthase subunit alpha, chloroplastic from Adiantum capillus-veneris (Maidenhair fern).